The following is a 403-amino-acid chain: Tripartite motif-containing protein 59 (403 aa).

Residues 10–60 (CPICYSIFEDPRVLPCSHTFCRNCLENILQASGNFYIWRPLRIPLKCPNCR) form an RING-type zinc finger. The B box-type zinc finger occupies 92 to 134 (PDIVTCPEHYRQPLNVYCLLDKKLVCGHCLTIGQHHGHPIDDL). Residues C97, H100, C120, and H126 each coordinate Zn(2+). A coiled-coil region spans residues 163–246 (LIEKLKEQKS…ALTISLQEES (84 aa)). A helical membrane pass occupies residues 329–349 (ILNIVVVTLISVILMSILFFN).

The protein belongs to the TRIM/RBCC family. Interacts with ECSIT.

The protein localises to the endoplasmic reticulum membrane. It catalyses the reaction S-ubiquitinyl-[E2 ubiquitin-conjugating enzyme]-L-cysteine + [acceptor protein]-L-lysine = [E2 ubiquitin-conjugating enzyme]-L-cysteine + N(6)-ubiquitinyl-[acceptor protein]-L-lysine.. It functions in the pathway protein modification; protein ubiquitination. Its function is as follows. E3 ubiquitin ligase involved in different processes such as development and immune response. Serves as a negative regulator for innate immune signaling pathways by suppressing RLR-induced activation of IRF3/7 and NF-kappa-B via interaction with adapter ECSIT. Regulates autophagy through modulating both the transcription and the ubiquitination of BECN1. On the one hand, regulates the transcription of BECN1 through negatively modulating the NF-kappa-B pathway. On the other hand, regulates TRAF6-mediated 'Lys-63'-linked ubiquitination of BECN1, thus affecting the formation of the BECN1-PIK3C3 complex. In addition, mediates 'Lys-48'-linked ubiquitination of TRAF6 and thereby promotes TRAF6 proteasomal degradation. Also acts as a critical regulator for early embryo development from blastocyst stage to gastrula through modulating F-actin assembly and WASH1 'Lys-63'-linked ubiquitination. This Homo sapiens (Human) protein is Tripartite motif-containing protein 59 (TRIM59).